Consider the following 308-residue polypeptide: Staphylococcal superantigen-like 4 (308 aa).

A signal peptide spans M1–A30. The interval A28–N117 is disordered. 2 stretches are compositionally biased toward polar residues: residues P33–S47 and S55–A76. The segment covering T77–P93 has biased composition (low complexity). Over residues Q94 to T114 the composition is skewed to polar residues. Residues V180–Y278 are sialyl Lewis X-binding.

This sequence belongs to the staphylococcal/streptococcal toxin family.

The protein resides in the secreted. Functionally, secreted protein that plays a role in immune innate response inhibition by interfering with host TLR2-mediated pathway. This chain is Staphylococcal superantigen-like 4, found in Staphylococcus aureus (strain Newman).